Consider the following 67-residue polypeptide: Coiled-coil domain-containing protein 179 (67 aa).

2 disordered regions span residues 1–32 (MCLR…RQSV) and 47–67 (RKLG…ILWT). The stretch at 27-53 (STRQSVEKRINYMQNLQKEKRKLGKRF) forms a coiled coil.

The polypeptide is Coiled-coil domain-containing protein 179 (Ccdc179) (Mus musculus (Mouse)).